The primary structure comprises 519 residues: S-type anion channel SLAH2 (519 aa).

Residues 1–31 are disordered; the sequence is MNNPRSVSPLVSPANHSDLLENQRQSGSGDF. Residues 1–140 are Cytoplasmic-facing; that stretch reads MNNPRSVSPL…LPEDKTWPFL (140 aa). Residues 20–29 show a composition bias toward polar residues; it reads LENQRQSGSG. 2 positions are modified to phosphoserine: Ser-77 and Ser-85. The helical transmembrane segment at 141 to 161 threads the bilayer; that stretch reads LRFPITSYGMCLGVSSQAIMW. The Extracellular portion of the chain corresponds to 162–185; that stretch reads KTLATTEAEKFLHVTQVINHVLWW. Residues 186–206 form a helical membrane-spanning segment; that stretch reads ISLLLLLAVSITYLFKTILFF. Residues 207–220 are Cytoplasmic-facing; sequence EAVRREFRHPIRVN. A helical membrane pass occupies residues 221–241; sequence FFFAPLISILFLALGIPHSII. Residues 242–247 lie on the Extracellular side of the membrane; it reads SHLPST. A helical transmembrane segment spans residues 248–268; it reads LWYFLMAPILFLEMKIYGQWM. At 269–281 the chain is on the cytoplasmic side; it reads SGGQRRLSKVANP. The helical transmembrane segment at 282-302 threads the bilayer; sequence TNHLSIVGNFAGALLGASMGL. The Extracellular segment spans residues 303 to 304; that stretch reads KE. A helical membrane pass occupies residues 305–325; the sequence is GPIFFFAIGLAYYLVLFVTLY. At 326–340 the chain is on the cytoplasmic side; it reads QRLPTNETLPKELHP. The helical transmembrane segment at 341–361 threads the bilayer; it reads VFFLFVAAPAVASMAWTKISA. Position 362 (Ser-362) is a topological domain, extracellular. The chain crosses the membrane as a helical span at residues 363–383; that stretch reads FDLGSRLAYFISLFLYFSLVC. Residues 384–389 lie on the Cytoplasmic side of the membrane; it reads RINLFR. A helical transmembrane segment spans residues 390–410; the sequence is GFKFSLAWWAYTFPMTAVASA. Residues 411–424 are Extracellular-facing; sequence TIKYSDEVTGVATK. Residues 425–445 traverse the membrane as a helical segment; the sequence is ILSVVMSGAATLTVIAVLGLT. Residues 446–519 are Cytoplasmic-facing; that stretch reads VMHAFVQRDL…VDSSTVQNSN (74 aa). A disordered region spans residues 495-519; it reads PEDNQIDLESPPLVNVDSSTVQNSN. Positions 510–519 are enriched in polar residues; it reads VDSSTVQNSN.

Belongs to the SLAC1 S-type anion channel family. Homotrimer. In terms of tissue distribution, expressed in lateral root primordia and tap root tips.

Its subcellular location is the cell membrane. Its function is as follows. Slow, weak voltage-dependent S-type anion efflux channel involved in maintenance of anion homeostasis. The sequence is that of S-type anion channel SLAH2 (SLAH2) from Arabidopsis thaliana (Mouse-ear cress).